A 709-amino-acid polypeptide reads, in one-letter code: Nicastrin (709 aa).

The N-terminal stretch at 1–33 is a signal peptide; sequence MATAGGGSGADPGSRGLLRLLSFCVLLAGLCRG. Residues 34–669 lie on the Extracellular side of the membrane; the sequence is NSVERKIYIP…IFLIASKELE (636 aa). Residues Asn45 and Asn55 are each glycosylated (N-linked (GlcNAc...) asparagine). 2 cysteine pairs are disulfide-bonded: Cys50-Cys62 and Cys140-Cys159. Asn187, Asn200, and Asn204 each carry an N-linked (GlcNAc...) asparagine glycan. Cystine bridges form between Cys195–Cys213 and Cys230–Cys248. N-linked (GlcNAc...) asparagine glycans are attached at residues Asn264, Asn387, Asn417, Asn435, Asn464, Asn506, Asn530, Asn562, Asn573, Asn580, and Asn612. A disulfide bridge links Cys586 with Cys620. A helical membrane pass occupies residues 670-690; it reads LITLTVGFGILIFSLIVTYCI. The Cytoplasmic portion of the chain corresponds to 691 to 709; it reads NAKADVLFIAPREPGAVSY.

This sequence belongs to the nicastrin family. In terms of assembly, component of the gamma-secretase complex. The functional gamma-secretase complex is composed of at least four polypeptides: a presenilin homodimer (PSEN1 or PSEN2), nicastrin (NCSTN), APH1 (APH1A or APH1B) and PSENEN/PEN2. Binds to proteolytic processed C-terminal fragments C83 and C99 of the amyloid precursor protein (APP). Interacts with PSEN1 and PSEN2. Post-translationally, N-glycosylated. In terms of tissue distribution, detected in brain (at protein level). Widely expressed.

It is found in the membrane. The protein resides in the cytoplasmic vesicle membrane. It localises to the melanosome. In terms of biological role, essential subunit of the gamma-secretase complex, an endoprotease complex that catalyzes the intramembrane cleavage of integral membrane proteins such as Notch receptors and APP (amyloid-beta precursor protein). The gamma-secretase complex plays a role in Notch and Wnt signaling cascades and regulation of downstream processes via its role in processing key regulatory proteins, and by regulating cytosolic CTNNB1 levels. The protein is Nicastrin (NCSTN) of Homo sapiens (Human).